A 755-amino-acid polypeptide reads, in one-letter code: Putative two-component response regulator-like APRR6 (755 aa).

A Response regulatory domain is found at 14–128 (SILLIDHDTA…DIKNMWQHVF (115 aa)).

This sequence belongs to the ARR-like family.

The protein resides in the nucleus. The chain is Putative two-component response regulator-like APRR6 (APRR6) from Arabidopsis thaliana (Mouse-ear cress).